Reading from the N-terminus, the 348-residue chain is Autophagy-related protein 27 (348 aa).

Positions 1 to 20 are cleaved as a signal peptide; the sequence is MYRPDLLAFLLPLLAAPVFS. At 21–274 the chain is on the lumenal side; it reads AETLDCGKIR…DDGGDNSSSH (254 aa). The 232-residue stretch at 24–255 folds into the MRH domain; that stretch reads LDCGKIRADG…TWHTKYACEK (232 aa). Cystine bridges form between C26-C69, C82-C89, and C175-C253. N-linked (GlcNAc...) asparagine glycosylation is found at N61 and N84. Residues 180 to 208 show a composition bias toward basic and acidic residues; that stretch reads EGTEGEWVSEEKYEKRADEKKDDDKKEDG. Residues 180–219 are disordered; the sequence is EGTEGEWVSEEKYEKRADEKKDDDKKEDGGDKDEGESTLE. 2 N-linked (GlcNAc...) asparagine glycosylation sites follow: N226 and N270. Residues 275-295 traverse the membrane as a helical segment; the sequence is WGFFTWFVLIAFLLIAGYLIF. Topologically, residues 296 to 348 are cytoplasmic; it reads SSWINFTRYGARGWDLLPHSDTIRDIPYLLKDFIRRILNTVQGTGSRGGYSAV.

It belongs to the ATG27 family. Forms a complex with ATG9 and ATG23.

The protein resides in the cytoplasmic vesicle membrane. It localises to the golgi apparatus membrane. The protein localises to the mitochondrion membrane. Its subcellular location is the preautophagosomal structure membrane. Effector of VPS34 phosphatidylinositol 3-phosphate kinase signaling. Regulates the cytoplasm to vacuole transport (Cvt) vesicle formation. Plays a role in ATG protein retrieval from the pre-autophagosomal structure (PAS) and is especially required for autophagy-dependent cycling of ATG9. Autophagy is required for proper vegetative growth, asexual/sexual reproduction, and full virulence. Autophagy is particularly involved in the biosynthesis of deoxynivalenol (DON), an important virulence determinant. The polypeptide is Autophagy-related protein 27 (Gibberella zeae (strain ATCC MYA-4620 / CBS 123657 / FGSC 9075 / NRRL 31084 / PH-1) (Wheat head blight fungus)).